Reading from the N-terminus, the 115-residue chain is uncharacterized protein (115 aa).

An N-terminal signal peptide occupies residues 1 to 29 (MKKAMAILAVLAAAAVICGLLFFHNDVTD).

This is an uncharacterized protein from Bacillus subtilis (strain 168).